Reading from the N-terminus, the 71-residue chain is Small ribosomal subunit protein bS21 (71 aa).

Belongs to the bacterial ribosomal protein bS21 family.

The chain is Small ribosomal subunit protein bS21 from Shewanella woodyi (strain ATCC 51908 / MS32).